Reading from the N-terminus, the 435-residue chain is 26S proteasome regulatory subunit 7 (435 aa).

A compositionally biased stretch (basic and acidic residues) spans 1-23; it reads MPDHLGDDMRKTKKDDTKEEEKN. Positions 1–24 are disordered; that stretch reads MPDHLGDDMRKTKKDDTKEEEKNF. ATP is bound at residue 218–225; the sequence is GPPGTGKT.

The protein belongs to the AAA ATPase family.

It is found in the cytoplasm. It localises to the nucleus. Its function is as follows. The 26S proteasome is involved in the ATP-dependent degradation of ubiquitinated proteins. The regulatory (or ATPase) complex confers ATP dependency and substrate specificity to the 26S complex. The polypeptide is 26S proteasome regulatory subunit 7 (rpt-1) (Caenorhabditis elegans).